A 150-amino-acid polypeptide reads, in one-letter code: D-aminoacyl-tRNA deacylase (150 aa).

The Gly-cisPro motif, important for rejection of L-amino acids signature appears at 138 to 139 (GP).

This sequence belongs to the DTD family. Homodimer.

It localises to the cytoplasm. It carries out the reaction glycyl-tRNA(Ala) + H2O = tRNA(Ala) + glycine + H(+). The enzyme catalyses a D-aminoacyl-tRNA + H2O = a tRNA + a D-alpha-amino acid + H(+). Its function is as follows. An aminoacyl-tRNA editing enzyme that deacylates mischarged D-aminoacyl-tRNAs. Also deacylates mischarged glycyl-tRNA(Ala), protecting cells against glycine mischarging by AlaRS. Acts via tRNA-based rather than protein-based catalysis; rejects L-amino acids rather than detecting D-amino acids in the active site. By recycling D-aminoacyl-tRNA to D-amino acids and free tRNA molecules, this enzyme counteracts the toxicity associated with the formation of D-aminoacyl-tRNA entities in vivo and helps enforce protein L-homochirality. The chain is D-aminoacyl-tRNA deacylase from Phocaeicola vulgatus (strain ATCC 8482 / DSM 1447 / JCM 5826 / CCUG 4940 / NBRC 14291 / NCTC 11154) (Bacteroides vulgatus).